Consider the following 438-residue polypeptide: Nucleolar protein 12 (438 aa).

2 disordered regions span residues 1–28 and 60–94; these read MGETNSSLDNENTSFVGKLSSSSNVDPT and ANGVEEAAETIESDTKEVQNIKPKSKKKKKKLNDS. Residues 60–71 show a composition bias toward acidic residues; it reads ANGVEEAAETIE. Ser94 and Ser95 each carry phosphoserine. A disordered region spans residues 108-146; the sequence is AEEDEEKDKDSAGLINDEEDKSPAKQSVLEERTSQEDVK. The segment covering 135–146 has biased composition (basic and acidic residues); it reads VLEERTSQEDVK. RRM domains are found at residues 164-262 and 270-348; these read KTVF…SVSH and RCVF…RAKS. Basic residues-rich tracts occupy residues 346–357 and 402–412; these read AKSTKPKSITRS and AKKKVNKKRKE. 2 disordered regions span residues 346–366 and 390–438; these read AKSTKPKSITRSKRGDEKTRT and EGHR…KKDK.

It belongs to the RRM RBM34 family.

It localises to the nucleus. It is found in the nucleolus. Functionally, involved in pre-25S rRNA processing. The polypeptide is Nucleolar protein 12 (nop12) (Schizosaccharomyces pombe (strain 972 / ATCC 24843) (Fission yeast)).